The primary structure comprises 565 residues: MKSPAPSRPQKMALIPACIFLCFAALSVQAEETPVTPQPPDILLGPLFNDVQNAKLFPDQKTFADAMPNSDPLMILADYRMQQNQSGFDLRHFVNVNFTLPKEGEKYVPPEGQSLREHIDGLWPVLTRSTENTEKWDSLLPLPEPYVVPGGRFREVYYWDSYFTMLGLAESGHWDKVADMVANFAHEIDTYGHIPNGNRSYYLSRSQPPFFALMVELLAQHEGDAALKQYLPQMQKEYAYWMDGVENLQAGQQEKRVVKLQDGTLLNRYWDDRDTPRPESWVEDIATAKSNPNRPATEIYRDLRSAAASGWDFSSRWMDNPQQLNTLRTTSIVPVDLNSLMFKMEKILARASKAAGDNAMANQYETLANARQKGIEKYLWNDQQGWYADYDLKSHKVRNQLTAAALFPLYVNAAAKDRANKMATATKTHLLQPGGLNTTSVKSGQQWDAPNGWAPLQWVATEGLQNYGQKEVAMDISWHFLTNVQHTYDREKKLVEKYDVSTTGTGGGGGEYPLQDGFGWTNGVTLKMLDLICPKEQPCDNVPATRPTVKSATTQPSTKEAQPTP.

An N-terminal signal peptide occupies residues 1-30; the sequence is MKSPAPSRPQKMALIPACIFLCFAALSVQA. Substrate-binding positions include arginine 152, 159-160, asparagine 196, 205-207, 277-279, and glycine 310; these read WD, RSQ, and RPE. Active-site proton donor/acceptor residues include aspartate 312 and glutamate 496. Position 511 (glutamate 511) interacts with substrate. Residues 538–565 are disordered; that stretch reads PCDNVPATRPTVKSATTQPSTKEAQPTP. Residues 548-565 show a composition bias toward polar residues; it reads TVKSATTQPSTKEAQPTP.

The protein belongs to the glycosyl hydrolase 37 family. As to quaternary structure, monomer.

It localises to the periplasm. It carries out the reaction alpha,alpha-trehalose + H2O = alpha-D-glucose + beta-D-glucose. Functionally, provides the cells with the ability to utilize trehalose at high osmolarity by splitting it into glucose molecules that can subsequently be taken up by the phosphotransferase-mediated uptake system. The chain is Periplasmic trehalase from Escherichia coli (strain 55989 / EAEC).